A 28-amino-acid polypeptide reads, in one-letter code: trp operon leader peptide (28 aa).

This protein is involved in control of the biosynthesis of tryptophan. This chain is trp operon leader peptide (trpL), found in Serratia marcescens.